The chain runs to 452 residues: MGRLFGTDGVRGVANADLTAELALGLSVAAAHVLAEAGTFEGHRPVAVVGRDPRASGEFLEAAVVAGLASAGVDVLLVGVLPTPAVAHLTGALGADLGVMLSASHNAMPDNGIKFFARGGHKLADDLEDRIEAVYEEHRTGAPWDRPTGAGVGRVTSYGEGADQYVAHLMSVLPNRLDGIKVVLDEAHGAAARVSPDAFTRAGAEIITIGAEPDGLNINDGCGSTHLAKLRAAVVEHGADLGIAHDGDADRCLAVDHTGAEVDGDQILAVLALAMRERSALRSDTVVATVMSNLGFKLAMEREGLSFVQTAVGDRYVLEEMKEHGYALGGEQSGHVIILDHATTGDGTLTGLLLAARVAQTGRTLQDLASVMERLPQVLVNVPDVDRARVKTSAELATAVAEAERELGATGRVLLRPSGTEPLVRVMVEAADIEQARSVAGRLADAVKSALG.

S104 serves as the catalytic Phosphoserine intermediate. Positions 104, 246, 248, and 250 each coordinate Mg(2+). S104 carries the phosphoserine modification.

It belongs to the phosphohexose mutase family. The cofactor is Mg(2+). In terms of processing, activated by phosphorylation.

The catalysed reaction is alpha-D-glucosamine 1-phosphate = D-glucosamine 6-phosphate. Its function is as follows. Catalyzes the conversion of glucosamine-6-phosphate to glucosamine-1-phosphate. The sequence is that of Phosphoglucosamine mutase from Streptomyces avermitilis (strain ATCC 31267 / DSM 46492 / JCM 5070 / NBRC 14893 / NCIMB 12804 / NRRL 8165 / MA-4680).